We begin with the raw amino-acid sequence, 146 residues long: Large ribosomal subunit protein uL13 (146 aa).

The protein belongs to the universal ribosomal protein uL13 family. As to quaternary structure, part of the 50S ribosomal subunit.

Functionally, this protein is one of the early assembly proteins of the 50S ribosomal subunit, although it is not seen to bind rRNA by itself. It is important during the early stages of 50S assembly. In Methylobacillus flagellatus (strain ATCC 51484 / DSM 6875 / VKM B-1610 / KT), this protein is Large ribosomal subunit protein uL13.